The chain runs to 62 residues: Lepidopteran-selective toxin (62 aa).

The N-terminal stretch at 1 to 24 (MKFLYGVILIALFLTVMTATLSEA) is a signal peptide. 4 cysteine pairs are disulfide-bonded: Cys26/Cys43, Cys29/Cys51, Cys40/Cys56, and Cys44/Cys58. Tyr62 is a propeptide.

It belongs to the short scorpion toxin superfamily. Chloride channel inhibitor family. In terms of tissue distribution, expressed by the venom gland.

Its subcellular location is the secreted. Toxin with unknown function in healthy organisms. On glioma cells, interacts with chloride channels (probably ClC-3/CLCN3) and MMP2 at the surface of glioma cells. This complex is then internalized via caveolae, thus inhibiting the chloride channels necessary for cell shrinkage and tumor propagation. Induces flaccid paralysis in H.virescens larvae. Is not toxic to S.falculata larvae or mice. This is Lepidopteran-selective toxin from Hottentotta tamulus (Eastern Indian scorpion).